The chain runs to 230 residues: Ion-translocating oxidoreductase complex subunit E (230 aa).

6 helical membrane passes run 18–38 (ALVQ…ITNA), 39–59 (LGLG…VSLI), 69–89 (IPVF…LMNA), 93–113 (GLYL…IIIG), 124–144 (VLPA…VLVV), and 182–202 (SFLL…LIAL).

The protein belongs to the NqrDE/RnfAE family. As to quaternary structure, the complex is composed of six subunits: RnfA, RnfB, RnfC, RnfD, RnfE and RnfG.

The protein resides in the cell inner membrane. Functionally, part of a membrane-bound complex that couples electron transfer with translocation of ions across the membrane. The sequence is that of Ion-translocating oxidoreductase complex subunit E from Vibrio parahaemolyticus serotype O3:K6 (strain RIMD 2210633).